The following is a 168-amino-acid chain: Protein A40 (168 aa).

Residues 1–9 are Cytoplasmic-facing; that stretch reads MNKPKTDYA. A helical; Signal-anchor for type II membrane protein transmembrane segment spans residues 10–30; it reads GYACCVICGLIVGIIFTATLL. Over 31–168 the chain is Extracellular; that stretch reads KVVERKLVHT…TTFLSYHYFG (138 aa). One can recognise a C-type lectin domain in the interval 63 to 168; that stretch reads YNNKCIHLST…TTFLSYHYFG (106 aa).

The protein belongs to the poxviridae A40 protein family.

The protein localises to the host membrane. This is Protein A40 from Homo sapiens (Human).